We begin with the raw amino-acid sequence, 287 residues long: Aquaporin PIP1-2 (287 aa).

Residues 1–37 (MEGKEEDVRLGANKFTERQPIGTAAQSQDKDYKEPPP) form a disordered region. The Cytoplasmic segment spans residues 1–55 (MEGKEEDVRLGANKFTERQPIGTAAQSQDKDYKEPPPAPLFEPGELSSWSFYRAG). Residues 56–76 (IAEFVATFLFLYITILTVMGV) traverse the membrane as a helical segment. Over 77 to 89 (VKSSTKCSTVGIQ) the chain is Extracellular. Residues 90–110 (GIAWAFGGMIFALVYCTAGIS) form a helical membrane-spanning segment. The Cytoplasmic portion of the chain corresponds to 111–133 (GGHINPAVTFGLFLARKLSLTRA). Residues 115-117 (NPA) carry the NPA 1 motif. A helical transmembrane segment spans residues 134–154 (LFYMVMQCLGAICGAGVVKGF). Residues 155–175 (QKGLYENNGGGANVVAPGYTK) are Extracellular-facing. The chain crosses the membrane as a helical span at residues 176 to 196 (GDGLGAEIVGTFILVYTVFSA). Topologically, residues 197 to 209 (TDAKRSARDSHVP) are cytoplasmic. Residues 210 to 230 (ILAPLPIGFAVFLVHLATIPI) traverse the membrane as a helical segment. Over 231–257 (TGTGINPARSLGAAIIYNKGHAWDDHW) the chain is Extracellular. The NPA 2 motif lies at 236–238 (NPA). A helical membrane pass occupies residues 258–278 (IFWVGPFIGAALAALYHQVVI). The Cytoplasmic segment spans residues 279–287 (RAIPFKSRS).

This sequence belongs to the MIP/aquaporin (TC 1.A.8) family. PIP (TC 1.A.8.11) subfamily. As to expression, barely detectable in roots, leaves and fruits.

The protein resides in the cell membrane. Its function is as follows. Water channel required to facilitate the transport of water across cell membrane; mercury-insensitive. Contributes to the tolerance to multiple abiotic stresses including salt (NaCl), cold and water deprivation, by modulating cytosolic K(+)/Na(+) ratio, maintaining osmotic balance, and reducing membrane injury (e.g. oxidative injury). This chain is Aquaporin PIP1-2, found in Musa acuminata subsp. malaccensis (Wild banana).